Here is a 240-residue protein sequence, read N- to C-terminus: Glutathione S-transferase omega-1 (240 aa).

An N-acetylserine modification is found at Ser-2. In terms of domain architecture, GST N-terminal spans 22–101 (GQIRVYSMRF…YLDEAYPEKK (80 aa)). The active-site Nucleophile is the Cys-32. Lys-57 carries the post-translational modification N6-acetyllysine. Residues Lys-59, Val-72, and 85–86 (ES) contribute to the glutathione site. The GST C-terminal domain occupies 106–227 (DPYKKARQKM…AKTYREYLNL (122 aa)). Ser-129 bears the Phosphoserine mark. Lys-152 carries the N6-acetyllysine modification.

It belongs to the GST superfamily. Omega family. As to quaternary structure, homodimer.

Its subcellular location is the cytoplasm. It is found in the cytosol. The catalysed reaction is RX + glutathione = an S-substituted glutathione + a halide anion + H(+). It carries out the reaction L-dehydroascorbate + 2 glutathione = glutathione disulfide + L-ascorbate. It catalyses the reaction methylarsonate + 2 glutathione + H(+) = methylarsonous acid + glutathione disulfide + H2O. Exhibits glutathione-dependent thiol transferase and dehydroascorbate reductase activities. Has S-(phenacyl)glutathione reductase activity. Also has glutathione S-transferase activity. Participates in the biotransformation of inorganic arsenic and reduces monomethylarsonic acid (MMA) and dimethylarsonic acid. This chain is Glutathione S-transferase omega-1 (Gsto1), found in Mus musculus (Mouse).